The chain runs to 691 residues: Threonine--tRNA ligase (691 aa).

The TGS domain occupies 1 to 69 (MSTPEITPAA…QQDVEVAAVP (69 aa)). The segment at 268–574 (DHRRLGQELD…LLEHYAGAFP (307 aa)) is catalytic. Zn(2+) is bound by residues cysteine 373, histidine 424, and histidine 551.

Belongs to the class-II aminoacyl-tRNA synthetase family. Homodimer. It depends on Zn(2+) as a cofactor.

The protein resides in the cytoplasm. It carries out the reaction tRNA(Thr) + L-threonine + ATP = L-threonyl-tRNA(Thr) + AMP + diphosphate + H(+). Functionally, catalyzes the attachment of threonine to tRNA(Thr) in a two-step reaction: L-threonine is first activated by ATP to form Thr-AMP and then transferred to the acceptor end of tRNA(Thr). Also edits incorrectly charged L-seryl-tRNA(Thr). This Corynebacterium jeikeium (strain K411) protein is Threonine--tRNA ligase.